Consider the following 87-residue polypeptide: Large ribosomal subunit protein bL31B (87 aa).

Belongs to the bacterial ribosomal protein bL31 family. Type B subfamily. As to quaternary structure, part of the 50S ribosomal subunit.

This chain is Large ribosomal subunit protein bL31B, found in Shigella boydii serotype 4 (strain Sb227).